We begin with the raw amino-acid sequence, 198 residues long: NADH-quinone oxidoreductase subunit B (198 aa).

Residues 1–20 (MGLNPTQVSTSGSPQVSQPA) are compositionally biased toward polar residues. The segment at 1–29 (MGLNPTQVSTSGSPQVSQPATGVLDPRTG) is disordered. Residues cysteine 77, cysteine 78, cysteine 142, and cysteine 172 each coordinate [4Fe-4S] cluster.

Belongs to the complex I 20 kDa subunit family. As to quaternary structure, NDH-1 is composed of 14 different subunits. Subunits NuoB, C, D, E, F, and G constitute the peripheral sector of the complex. [4Fe-4S] cluster serves as cofactor.

The protein resides in the cell inner membrane. The enzyme catalyses a quinone + NADH + 5 H(+)(in) = a quinol + NAD(+) + 4 H(+)(out). In terms of biological role, NDH-1 shuttles electrons from NADH, via FMN and iron-sulfur (Fe-S) centers, to quinones in the respiratory chain. The immediate electron acceptor for the enzyme in this species is believed to be ubiquinone. Couples the redox reaction to proton translocation (for every two electrons transferred, four hydrogen ions are translocated across the cytoplasmic membrane), and thus conserves the redox energy in a proton gradient. The polypeptide is NADH-quinone oxidoreductase subunit B (Afipia carboxidovorans (strain ATCC 49405 / DSM 1227 / KCTC 32145 / OM5) (Oligotropha carboxidovorans)).